A 631-amino-acid chain; its full sequence is Acurin A biosynthesis cluster transcription regulator (631 aa).

Residues 1-11 are compositionally biased toward polar residues; the sequence is MSPNMSLTASH. Positions 1 to 28 are disordered; it reads MSPNMSLTASHPQQPQPTPQSKAQLTRQ. The segment at residues 30–62 is a DNA-binding region (zn(2)-C6 fungal-type); sequence CNRCHASKLKCLRPPGVTTSKSCIRCIKADTEC. 3 disordered regions span residues 64 to 141, 489 to 522, and 536 to 573; these read YDPP…PDNR, CSSS…HPAT, and HSSS…YPTP. The segment covering 88–99 has biased composition (basic and acidic residues); that stretch reads IEAREPEVTDPR. Residues 119–128 show a composition bias toward polar residues; the sequence is NGSLAPSSAA.

The protein localises to the nucleus. In terms of biological role, transcription factor that positively regulates the expression of the cluster that mediates the biosynthesis of acurin A, a highly reduced polyketide coupled to a serine via a peptide bond. This chain is Acurin A biosynthesis cluster transcription regulator, found in Aspergillus aculeatus (strain ATCC 16872 / CBS 172.66 / WB 5094).